The following is a 577-amino-acid chain: 9-cis-epoxycarotenoid dioxygenase NCED6, chloroplastic (577 aa).

Positions 1 to 25 (MQHSLRSDLLPTKTSPRSHLLPQPK) are disordered. The Fe cation site is built by H276, H325, H390, and H563.

Belongs to the carotenoid oxygenase family. Fe(2+) serves as cofactor. In terms of tissue distribution, expressed before fertilization in male and female gametophytes, and then immediately after pollination, restricted to seed endosperm.

The protein resides in the plastid. It is found in the chloroplast stroma. The catalysed reaction is a 9-cis-epoxycarotenoid + O2 = a 12'-apo-carotenal + 2-cis,4-trans-xanthoxin. It carries out the reaction 9-cis-violaxanthin + O2 = (3S,5R,6S)-5,6-epoxy-3-hydroxy-5,6-dihydro-12'-apo-beta-caroten-12'-al + 2-cis,4-trans-xanthoxin. It catalyses the reaction 9'-cis-neoxanthin + O2 = (3S,5R,6R)-3,5-dihydroxy-6,7-didehydro-5,6-dihydro-12'-apo-beta-caroten-12'-al + 2-cis,4-trans-xanthoxin. Functionally, has a 11,12(11',12') 9-cis epoxycarotenoid cleavage activity. Catalyzes the first step of abscisic-acid biosynthesis from carotenoids. Contributes probably to abscisic acid synthesis for the induction of seed dormancy. The sequence is that of 9-cis-epoxycarotenoid dioxygenase NCED6, chloroplastic (NCED6) from Arabidopsis thaliana (Mouse-ear cress).